The following is a 103-amino-acid chain: Small ribosomal subunit protein uS10 (103 aa).

This sequence belongs to the universal ribosomal protein uS10 family. As to quaternary structure, part of the 30S ribosomal subunit.

In terms of biological role, involved in the binding of tRNA to the ribosomes. This chain is Small ribosomal subunit protein uS10, found in Chlorobium luteolum (strain DSM 273 / BCRC 81028 / 2530) (Pelodictyon luteolum).